A 741-amino-acid polypeptide reads, in one-letter code: Phosphoribosylformylglycinamidine synthase subunit PurL (741 aa).

The active site involves His-53. 2 residues coordinate ATP: Tyr-56 and Lys-95. Glu-97 contributes to the Mg(2+) binding site. Substrate contacts are provided by residues Ser-98 to His-101 and Arg-120. His-99 acts as the Proton acceptor in catalysis. Asp-121 contributes to the Mg(2+) binding site. Gln-244 provides a ligand contact to substrate. Mg(2+) is bound at residue Asp-274. Glu-318–Gln-320 serves as a coordination point for substrate. ATP-binding residues include Asp-501 and Gly-538. Asn-539 provides a ligand contact to Mg(2+). Ser-541 lines the substrate pocket.

It belongs to the FGAMS family. As to quaternary structure, monomer. Part of the FGAM synthase complex composed of 1 PurL, 1 PurQ and 2 PurS subunits.

It is found in the cytoplasm. The enzyme catalyses N(2)-formyl-N(1)-(5-phospho-beta-D-ribosyl)glycinamide + L-glutamine + ATP + H2O = 2-formamido-N(1)-(5-O-phospho-beta-D-ribosyl)acetamidine + L-glutamate + ADP + phosphate + H(+). It functions in the pathway purine metabolism; IMP biosynthesis via de novo pathway; 5-amino-1-(5-phospho-D-ribosyl)imidazole from N(2)-formyl-N(1)-(5-phospho-D-ribosyl)glycinamide: step 1/2. Its function is as follows. Part of the phosphoribosylformylglycinamidine synthase complex involved in the purines biosynthetic pathway. Catalyzes the ATP-dependent conversion of formylglycinamide ribonucleotide (FGAR) and glutamine to yield formylglycinamidine ribonucleotide (FGAM) and glutamate. The FGAM synthase complex is composed of three subunits. PurQ produces an ammonia molecule by converting glutamine to glutamate. PurL transfers the ammonia molecule to FGAR to form FGAM in an ATP-dependent manner. PurS interacts with PurQ and PurL and is thought to assist in the transfer of the ammonia molecule from PurQ to PurL. This is Phosphoribosylformylglycinamidine synthase subunit PurL from Limosilactobacillus fermentum (strain NBRC 3956 / LMG 18251) (Lactobacillus fermentum).